Reading from the N-terminus, the 239-residue chain is Riboflavin synthase (239 aa).

Lumazine-binding repeat units follow at residues 1–105 and 106–205; these read MFTG…MGGH and VVQG…EKQI. 2,4-dihydroxypteridine-binding positions include 4–6, 54–56, 70–75, 109–111, K145, 154–156, and 170–175; these read GLV, CLT, GISPET, GHV, SLT, and SMVSYT.

Homotrimer.

The enzyme catalyses 2 6,7-dimethyl-8-(1-D-ribityl)lumazine + H(+) = 5-amino-6-(D-ribitylamino)uracil + riboflavin. Its pathway is cofactor biosynthesis; riboflavin biosynthesis; riboflavin from 2-hydroxy-3-oxobutyl phosphate and 5-amino-6-(D-ribitylamino)uracil: step 2/2. In terms of biological role, catalyzes the dismutation of two molecules of 6,7-dimethyl-8-ribityllumazine, resulting in the formation of riboflavin and 5-amino-6-(D-ribitylamino)uracil. The chain is Riboflavin synthase (RIB5) from Meyerozyma guilliermondii (strain ATCC 6260 / CBS 566 / DSM 6381 / JCM 1539 / NBRC 10279 / NRRL Y-324) (Yeast).